The primary structure comprises 209 residues: Ribosomal RNA large subunit methyltransferase E (209 aa).

Gly63, Trp65, Asp83, Asp99, and Asp124 together coordinate S-adenosyl-L-methionine. The active-site Proton acceptor is the Lys164.

This sequence belongs to the class I-like SAM-binding methyltransferase superfamily. RNA methyltransferase RlmE family.

It localises to the cytoplasm. The enzyme catalyses uridine(2552) in 23S rRNA + S-adenosyl-L-methionine = 2'-O-methyluridine(2552) in 23S rRNA + S-adenosyl-L-homocysteine + H(+). Specifically methylates the uridine in position 2552 of 23S rRNA at the 2'-O position of the ribose in the fully assembled 50S ribosomal subunit. In Shewanella piezotolerans (strain WP3 / JCM 13877), this protein is Ribosomal RNA large subunit methyltransferase E.